The sequence spans 354 residues: Uroporphyrinogen decarboxylase (354 aa).

Substrate contacts are provided by residues 27–31 (RQAGR), Asp77, Tyr153, Thr208, and His326.

This sequence belongs to the uroporphyrinogen decarboxylase family. Homodimer.

It is found in the cytoplasm. It carries out the reaction uroporphyrinogen III + 4 H(+) = coproporphyrinogen III + 4 CO2. It functions in the pathway porphyrin-containing compound metabolism; protoporphyrin-IX biosynthesis; coproporphyrinogen-III from 5-aminolevulinate: step 4/4. Catalyzes the decarboxylation of four acetate groups of uroporphyrinogen-III to yield coproporphyrinogen-III. This Neisseria gonorrhoeae (strain ATCC 700825 / FA 1090) protein is Uroporphyrinogen decarboxylase.